We begin with the raw amino-acid sequence, 181 residues long: Oligoribonuclease (181 aa).

An Exonuclease domain is found at 8–171; the sequence is LIWIDLEMTG…QDIQESIAEL (164 aa). Tyrosine 129 is a catalytic residue.

Belongs to the oligoribonuclease family.

The protein localises to the cytoplasm. Functionally, 3'-to-5' exoribonuclease specific for small oligoribonucleotides. The sequence is that of Oligoribonuclease from Shewanella putrefaciens (strain CN-32 / ATCC BAA-453).